A 404-amino-acid polypeptide reads, in one-letter code: L-cysteine:1D-myo-inositol 2-amino-2-deoxy-alpha-D-glucopyranoside ligase 1 (404 aa).

Cysteine 47 is a binding site for Zn(2+). L-cysteinyl-5'-AMP-binding positions include 47–50 (CGIT), threonine 62, and 85–87 (NIT). The short motif at 49–59 (ITPYDSTHLGH) is the 'HIGH' region element. The 'ERGGDP' region motif lies at 188 to 193 (ERGGDP). Tryptophan 228 is a binding site for L-cysteinyl-5'-AMP. Cysteine 232 lines the Zn(2+) pocket. An L-cysteinyl-5'-AMP-binding site is contributed by 250-252 (GSD). Zn(2+) is bound at residue histidine 257. Isoleucine 284 is an L-cysteinyl-5'-AMP binding site. The 'KMSKS' region motif lies at 290–294 (KMSKS).

Belongs to the class-I aminoacyl-tRNA synthetase family. MshC subfamily. As to quaternary structure, monomer. The cofactor is Zn(2+).

The enzyme catalyses 1D-myo-inositol 2-amino-2-deoxy-alpha-D-glucopyranoside + L-cysteine + ATP = 1D-myo-inositol 2-(L-cysteinylamino)-2-deoxy-alpha-D-glucopyranoside + AMP + diphosphate + H(+). Functionally, catalyzes the ATP-dependent condensation of GlcN-Ins and L-cysteine to form L-Cys-GlcN-Ins. In Corynebacterium urealyticum (strain ATCC 43042 / DSM 7109), this protein is L-cysteine:1D-myo-inositol 2-amino-2-deoxy-alpha-D-glucopyranoside ligase 1.